Here is a 148-residue protein sequence, read N- to C-terminus: Large ribosomal subunit protein uL15 (148 aa).

Residues 1-57 form a disordered region; it reads MRLNDVKPQKGSKKRRRRVGRGISAGQGASAGLGMRGQKSRSGSGTRPGFEGGQQPL. The span at 10–20 shows a compositional bias: basic residues; that stretch reads KGSKKRRRRVG. A compositionally biased stretch (gly residues) spans 23-35; it reads ISAGQGASAGLGM.

It belongs to the universal ribosomal protein uL15 family. As to quaternary structure, part of the 50S ribosomal subunit.

Binds to the 23S rRNA. This is Large ribosomal subunit protein uL15 from Trichormus variabilis (strain ATCC 29413 / PCC 7937) (Anabaena variabilis).